The sequence spans 304 residues: Glutaminase (304 aa).

Positions 63, 113, 157, 164, 188, 240, and 258 each coordinate substrate.

This sequence belongs to the glutaminase family. Homotetramer.

The enzyme catalyses L-glutamine + H2O = L-glutamate + NH4(+). The sequence is that of Glutaminase from Christiangramia forsetii (strain DSM 17595 / CGMCC 1.15422 / KT0803) (Gramella forsetii).